A 522-amino-acid chain; its full sequence is Cytochrome bd-I ubiquinol oxidase subunit 1 (522 aa).

The residue at position 1 (Met1) is an N-formylmethionine. Topologically, residues 1–22 (MLDIVELSRLQFALTAMYHFLF) are cytoplasmic. His19 contributes to the heme b binding site. Residues 23-42 (VPLTLGMAFLLAIMETVYVL) traverse the membrane as a helical segment. Residues 43–94 (SGKQIYKDMTKFWGKLFGINFALGVATGLTMEFQFGTNWSYYSHYVGDIFGA) are Periplasmic-facing. A helical membrane pass occupies residues 95 to 114 (PLAIEGLMAFFLESTFVGLF). The Cytoplasmic portion of the chain corresponds to 115–129 (FFGWDRLGKVQHMCV). The chain crosses the membrane as a helical span at residues 130 to 149 (TWLVALGSNLSALWILVANG). Residues 150-187 (WMQNPIASDFNFETMRMEMVSFSELVLNPVAQVKFVHT) are Periplasmic-facing. His186 serves as a coordination point for heme b. A helical transmembrane segment spans residues 188 to 207 (VASGYVTGAMFILGISAWYM). Over 208-219 (LKGRDFAFAKRS) the chain is Cytoplasmic. The chain crosses the membrane as a helical span at residues 220–239 (FAIAASFGMAAVLSVIVLGD). Residues 240–392 (ESGYEMGDVQ…VAPLYFAFRI (153 aa)) are Periplasmic-facing. Position 393 (Met393) interacts with heme b. The chain crosses the membrane as a helical span at residues 393–412 (MVACGFLLLAIIALSFWSVI). Topologically, residues 413–470 (RNRIGEKKWLLRAALYGIPLPWIAVEAGWFVAEYGRQPWAIGEVLPTAVANSSLTAGD) are cytoplasmic. Residues 471–490 (LIFSMVLICGLYTLFLVAEL) traverse the membrane as a helical segment. Residues 491–522 (FLMFKFARLGPSSLKTGRYHFEQSSTTTQPAR) lie on the Periplasmic side of the membrane.

It belongs to the cytochrome ubiquinol oxidase subunit 1 family. As to quaternary structure, heterodimer of subunits I and II. Heme b serves as cofactor. The cofactor is heme d cis-diol.

The protein resides in the cell inner membrane. The catalysed reaction is 2 a ubiquinol + O2(in) + 4 H(+)(in) = 2 a ubiquinone + 2 H2O(in) + 4 H(+)(out). It participates in energy metabolism; oxidative phosphorylation. In terms of biological role, a terminal oxidase that produces a proton motive force by the vectorial transfer of protons across the inner membrane. It is the component of the aerobic respiratory chain of E.coli that predominates when cells are grown at low aeration. Generates a proton motive force using protons and electrons from opposite sides of the membrane to generate H(2)O, transferring 1 proton/electron. This Escherichia coli O6:H1 (strain CFT073 / ATCC 700928 / UPEC) protein is Cytochrome bd-I ubiquinol oxidase subunit 1 (cydA).